The sequence spans 264 residues: Thiazole synthase (264 aa).

The Schiff-base intermediate with DXP role is filled by lysine 98. Residues glycine 159, 185 to 186 (AG), and 207 to 208 (AT) each bind 1-deoxy-D-xylulose 5-phosphate.

It belongs to the ThiG family. Homotetramer. Forms heterodimers with either ThiH or ThiS.

Its subcellular location is the cytoplasm. The enzyme catalyses [ThiS sulfur-carrier protein]-C-terminal-Gly-aminoethanethioate + 2-iminoacetate + 1-deoxy-D-xylulose 5-phosphate = [ThiS sulfur-carrier protein]-C-terminal Gly-Gly + 2-[(2R,5Z)-2-carboxy-4-methylthiazol-5(2H)-ylidene]ethyl phosphate + 2 H2O + H(+). It functions in the pathway cofactor biosynthesis; thiamine diphosphate biosynthesis. Functionally, catalyzes the rearrangement of 1-deoxy-D-xylulose 5-phosphate (DXP) to produce the thiazole phosphate moiety of thiamine. Sulfur is provided by the thiocarboxylate moiety of the carrier protein ThiS. In vitro, sulfur can be provided by H(2)S. This Mycobacterium marinum (strain ATCC BAA-535 / M) protein is Thiazole synthase.